We begin with the raw amino-acid sequence, 5098 residues long: Malformin synthetase mlfA (5098 aa).

An adenylation 1 region spans residues 225 to 616 (ERHAANRPHS…CGRADTQVKL (392 aa)). The 74-residue stretch at 756–829 (SRLEQEIQLA…EAASLAKVQE (74 aa)) folds into the Carrier 1 domain. At Ser-790 the chain carries O-(pantetheine 4'-phosphoryl)serine. A condensation 1 region spans residues 867–1298 (EDVFPCTTMQ…ALDSLTLLQA (432 aa)). Positions 1326–1715 (DGWVTRQPES…GRKDTQVKLR (390 aa)) are adenylation 2. A Carrier 2 domain is found at 1853–1930 (TAASELERTL…QLAAEFGEPA (78 aa)). Ser-1890 is subject to O-(pantetheine 4'-phosphoryl)serine. Disordered stretches follow at residues 1930–1960 (AGQS…DGVD) and 1993–2022 (GSSS…RVVS). Low complexity-rich tracts occupy residues 1933 to 1957 (SASS…STND) and 1993 to 2011 (GSSS…SSSS). The condensation 2 stretch occupies residues 2063–2478 (EDIYPATALQ…ALSHSDRQTL (416 aa)). The tract at residues 2501–2893 (VRTPHAPAVC…IGRRDGQLKL (393 aa)) is adenylation 3. The Carrier 3 domain occupies 3029-3105 (RPVTAQEREM…QLMRHLSATR (77 aa)). Position 3066 is an O-(pantetheine 4'-phosphoryl)serine (Ser-3066). Condensation regions lie at residues 3122-3587 (WVAL…TYDQ) and 3608-4027 (NIYP…EQLM). Positions 4052-4442 (HASREAVCAW…VGRKDNQIKF (391 aa)) are adenylation 4. The 77-residue stretch at 4576 to 4652 (MPSTAAERKM…DLAYRTTNLV (77 aa)) folds into the Carrier 4 domain. The residue at position 4613 (Ser-4613) is an O-(pantetheine 4'-phosphoryl)serine. Residues 4689 to 5016 (DVLPTTSFQR…LQTIVQHQNN (328 aa)) form a condensation 5 region.

It belongs to the NRP synthetase family.

The protein operates within secondary metabolite biosynthesis. Nonribosomal peptide synthetase; part of the gene cluster that mediates the biosynthesis of malformins, cyclic pentapeptides with a disulfide bond between 2 consecutive cysteins, that show potential anti-tumor as well as antimalarial and antitrypanosomal properties. The nonribosomal peptide synthetase mlfA is responsible of the formation of the cyclic pentapeptide. The malformin biosynthesis clusters in malformin-producing fungi also contain enzymes involved in the formation of the disulfide bond between the two consecutive cysteins within malformins, in addition to additional tailoring enzymes such as methyltransferases or oxidoreductases. They are also composed of up to 4 major facilitator superfamily transporters, and transcription factors probably involved in the regulation of the expression of those clusters. This Aspergillus homomorphus (strain CBS 101889) protein is Malformin synthetase mlfA.